A 185-amino-acid chain; its full sequence is Elongation factor P (185 aa).

The protein belongs to the elongation factor P family.

The protein localises to the cytoplasm. The protein operates within protein biosynthesis; polypeptide chain elongation. Involved in peptide bond synthesis. Stimulates efficient translation and peptide-bond synthesis on native or reconstituted 70S ribosomes in vitro. Probably functions indirectly by altering the affinity of the ribosome for aminoacyl-tRNA, thus increasing their reactivity as acceptors for peptidyl transferase. The chain is Elongation factor P from Clostridium kluyveri (strain ATCC 8527 / DSM 555 / NBRC 12016 / NCIMB 10680 / K1).